Consider the following 442-residue polypeptide: O-methyltransferase pgmB (442 aa).

S-adenosyl-L-methionine is bound at residue D291. H341 acts as the Proton acceptor in catalysis.

The protein belongs to the class I-like SAM-binding methyltransferase superfamily. Cation-independent O-methyltransferase family.

Its pathway is pigment biosynthesis. The protein operates within secondary metabolite biosynthesis. Functionally, O-methyltransferase; part of the gene cluster that mediates the biosynthesis of pleosporalin A, ascomycone A, as well as a third cryptic naphthoquinone derived pigment, all responsible for the coloration of conidia. Specifically methylates position C-6 of the pgmA product 3-acetonyl-1,6,8-trihydroxy-2-naphthaldehyde to yield fusarubinaldehyde. The pathway begins with the biosynthesis of the cyclized heptaketide 3-acetonyl-1,6,8-trihydroxy-2-naphthaldehyde by the NR-PKS pgmA. The C-6 hydroxyl group is further methylated by the O-methyltransferase pgmB to yield fusarubinaldehyde which is in turn oxidized by the cytochrome P450 monooxygenase pgmC at C-9. The C-1 hydroxyl group is then methylated spontaneously. Although pgmE, pgmD and pgmH are essential for the production of pleosporalin A, it is not the case for the 2 other final products and it remains difficult to assign a specific function to each enzyme. PgmF and pgmG seem not to be involved in pigment biosynthesis although they were regulated by the cluster-specific transcription factor pgmR. The protein is O-methyltransferase pgmB of Aspergillus terreus.